The chain runs to 136 residues: Large ribosomal subunit protein uL16 (136 aa).

It belongs to the universal ribosomal protein uL16 family. Part of the 50S ribosomal subunit.

Its function is as follows. Binds 23S rRNA and is also seen to make contacts with the A and possibly P site tRNAs. This is Large ribosomal subunit protein uL16 from Haemophilus ducreyi (strain 35000HP / ATCC 700724).